The primary structure comprises 340 residues: Outer membrane protein B (340 aa).

A signal peptide spans Met-1 to Ala-26.

This sequence belongs to the chlamydial OMP family.

The protein localises to the cell outer membrane. This chain is Outer membrane protein B (ompB), found in Chlamydia muridarum (strain MoPn / Nigg).